The chain runs to 472 residues: UDP-N-acetylmuramoyl-L-alanyl-D-glutamate--2,6-diaminopimelate ligase (472 aa).

Ser-21 is a UDP-N-acetyl-alpha-D-muramoyl-L-alanyl-D-glutamate binding site. Residue 99 to 105 coordinates ATP; the sequence is GTNGKTS. UDP-N-acetyl-alpha-D-muramoyl-L-alanyl-D-glutamate-binding positions include 143–144, Ser-170, Gln-176, and Arg-178; that span reads TT. Lys-210 carries the post-translational modification N6-carboxylysine. Meso-2,6-diaminopimelate-binding positions include Arg-367, 391-394, Gly-440, and Glu-444; that span reads DNPR. A Meso-diaminopimelate recognition motif motif is present at residues 391-394; the sequence is DNPR.

It belongs to the MurCDEF family. MurE subfamily. Requires Mg(2+) as cofactor. Post-translationally, carboxylation is probably crucial for Mg(2+) binding and, consequently, for the gamma-phosphate positioning of ATP.

Its subcellular location is the cytoplasm. It catalyses the reaction UDP-N-acetyl-alpha-D-muramoyl-L-alanyl-D-glutamate + meso-2,6-diaminopimelate + ATP = UDP-N-acetyl-alpha-D-muramoyl-L-alanyl-gamma-D-glutamyl-meso-2,6-diaminopimelate + ADP + phosphate + H(+). It participates in cell wall biogenesis; peptidoglycan biosynthesis. Its function is as follows. Catalyzes the addition of meso-diaminopimelic acid to the nucleotide precursor UDP-N-acetylmuramoyl-L-alanyl-D-glutamate (UMAG) in the biosynthesis of bacterial cell-wall peptidoglycan. The sequence is that of UDP-N-acetylmuramoyl-L-alanyl-D-glutamate--2,6-diaminopimelate ligase from Anaplasma marginale (strain St. Maries).